The sequence spans 1091 residues: Voltage-dependent calcium channel subunit alpha-2/delta-3 (1091 aa).

Positions 1-28 (MAGPGSPRRASRGASALLAAALLYAALG) are cleaved as a signal peptide. Over 29-1068 (DVVRSEQQIP…HPEENARECG (1040 aa)) the chain is Extracellular. Asn166 is a glycosylation site (N-linked (GlcNAc...) asparagine). Residues 256–438 (DVVILVDVSG…ENVMEYLHVL (183 aa)) form the VWFA domain. A divalent metal cation-binding residues include Asp262, Ser264, and Ser266. An MIDAS-like motif motif is present at residues 262–266 (DVSGS). Asn309 carries N-linked (GlcNAc...) asparagine glycosylation. Cys412 and Cys1055 are disulfide-bonded. The Cache domain occupies 452–549 (WTEAYIDSTL…RLLYEEGKKR (98 aa)). 3 N-linked (GlcNAc...) asparagine glycosylation sites follow: Asn553, Asn632, and Asn793. Tyr924 bears the Phosphotyrosine mark. A helical transmembrane segment spans residues 1069 to 1089 (GAPSLQAQTVLLLLPLLLMLF). The Cytoplasmic segment spans residues 1090–1091 (SR).

This sequence belongs to the calcium channel subunit alpha-2/delta family. Dimer formed of alpha-2-2 and delta-2 chains; disulfide-linked. Voltage-dependent calcium channels are multisubunit complexes, consisting of alpha-1 (CACNA1), alpha-2 (CACNA2D), beta (CACNB) and delta (CACNA2D) subunits in a 1:1:1:1 ratio. Post-translationally, N-glycosylated. In terms of processing, may be proteolytically processed into subunits alpha-2-3 and delta-3 that are disulfide-linked. It is however unclear whether such cleavage really takes place in vivo and has a functional role. As to expression, only detected in brain. Not present in lung, testis, aorta, spleen, jejunum, ventricular muscle and kidney (at protein level). According to PubMed:11687876, it is brain-specific, while according to PubMed:11245980, it is widely expressed.

It is found in the membrane. Its function is as follows. The alpha-2/delta subunit of voltage-dependent calcium channels regulates calcium current density and activation/inactivation kinetics of the calcium channel. Acts as a regulatory subunit for P/Q-type calcium channel (CACNA1A), N-type (CACNA1B), L-type (CACNA1C OR CACNA1D) but not T-type (CACNA1G). The protein is Voltage-dependent calcium channel subunit alpha-2/delta-3 (CACNA2D3) of Homo sapiens (Human).